We begin with the raw amino-acid sequence, 161 residues long: Troponin C, slow skeletal and cardiac muscles (161 aa).

M1 carries the post-translational modification N-acetylmethionine. EF-hand domains follow at residues 16 to 51 (QKNE…LGQN), 52 to 87 (PTPE…CMKD), 92 to 127 (KSEE…TGET), and 128 to 161 (ITED…KGVE). D65, D67, S69, T71, and E76 together coordinate Ca(2+). Phosphoserine is present on S98. Residues D105, N107, D109, Y111, E116, D141, N143, D145, R147, and E152 each coordinate Ca(2+).

It belongs to the troponin C family.

In terms of biological role, troponin is the central regulatory protein of striated muscle contraction. Tn consists of three components: Tn-I which is the inhibitor of actomyosin ATPase, Tn-T which contains the binding site for tropomyosin and Tn-C. The binding of calcium to Tn-C abolishes the inhibitory action of Tn on actin filaments. The sequence is that of Troponin C, slow skeletal and cardiac muscles (TNNC1) from Homo sapiens (Human).